We begin with the raw amino-acid sequence, 356 residues long: Ubiquitin-conjugating enzyme E2 Z (356 aa).

Residues 1 to 16 (MAESPTEEAATATAGA) are compositionally biased toward low complexity. The segment at 1 to 22 (MAESPTEEAATATAGAGAAGPG) is disordered. Residues 101-255 (QCLLRIKRDI…IRHETIRVAV (155 aa)) form the UBC core domain. C190 (glycyl thioester intermediate) is an active-site residue. A disordered region spans residues 334–356 (NAEMDSDSSSSGTETDLHGSLRV). S339 carries the phosphoserine modification.

This sequence belongs to the ubiquitin-conjugating enzyme family.

It is found in the cytoplasm. It localises to the nucleus. It catalyses the reaction S-ubiquitinyl-[E1 ubiquitin-activating enzyme]-L-cysteine + [E2 ubiquitin-conjugating enzyme]-L-cysteine = [E1 ubiquitin-activating enzyme]-L-cysteine + S-ubiquitinyl-[E2 ubiquitin-conjugating enzyme]-L-cysteine.. The protein operates within protein modification; protein ubiquitination. Functionally, catalyzes the covalent attachment of ubiquitin to other proteins. Specific substrate for UBA6, not charged with ubiquitin by UBE1. May be involved in apoptosis regulation. The polypeptide is Ubiquitin-conjugating enzyme E2 Z (Ube2z) (Rattus norvegicus (Rat)).